Reading from the N-terminus, the 154-residue chain is SsrA-binding protein (154 aa).

This sequence belongs to the SmpB family.

It is found in the cytoplasm. Its function is as follows. Required for rescue of stalled ribosomes mediated by trans-translation. Binds to transfer-messenger RNA (tmRNA), required for stable association of tmRNA with ribosomes. tmRNA and SmpB together mimic tRNA shape, replacing the anticodon stem-loop with SmpB. tmRNA is encoded by the ssrA gene; the 2 termini fold to resemble tRNA(Ala) and it encodes a 'tag peptide', a short internal open reading frame. During trans-translation Ala-aminoacylated tmRNA acts like a tRNA, entering the A-site of stalled ribosomes, displacing the stalled mRNA. The ribosome then switches to translate the ORF on the tmRNA; the nascent peptide is terminated with the 'tag peptide' encoded by the tmRNA and targeted for degradation. The ribosome is freed to recommence translation, which seems to be the essential function of trans-translation. This chain is SsrA-binding protein, found in Staphylococcus aureus (strain Mu3 / ATCC 700698).